A 415-amino-acid chain; its full sequence is MSKLMTRTSGSSSPNTIPDQIESPTSSRSVTQTTNGSHQFVIQGYSLAKGIGVGKHIASDNFSVGGYQWTIFVYPDGKNPEDNSSYVSVFIVLASECTEVRALFELSLVDQSGKGKHKVHSHFNRSLDGGPYTLKYRGSMWGYKRFFRRSLLETSDYLKDDCLKINCTVGVVVSEMHCPRLLSIHVPDSELGSHFGKLLDTLQGSDVTFDVAGEKFQAHKLVLAARSQFFRSMFYNTLAENNSDVVISDLEPKVFKALLHFMYKDSLPGDVEPLTAHSFDLLRPSEIDDTLIVKLLAAAEMYNLSRLRLLCESHICKGISISSVSKILALSDKYNASELKSVSLKFTAENLAAVLQTKAYEDLKDDCPNLQSELLKAVAGYDDTSSSGGGKSQSVWAQLSNGGETSSRRVRQRTT.

The tract at residues 1-33 is disordered; sequence MSKLMTRTSGSSSPNTIPDQIESPTSSRSVTQT. An MATH domain is found at 35-169; sequence NGSHQFVIQG…DDCLKINCTV (135 aa). A BTB domain is found at 205–271; it reads SDVTFDVAGE…MYKDSLPGDV (67 aa). The segment at 385-415 is disordered; sequence SSSGGGKSQSVWAQLSNGGETSSRRVRQRTT. Polar residues predominate over residues 392–405; it reads SQSVWAQLSNGGET.

Belongs to the Tdpoz family. Heterodimer with BPM1. Interacts with RAP2-4. Interacts with CUL3A. Binds to MYB56 at the promoter of FLOWERING LOCUS T (FT). In terms of tissue distribution, ubiquitous.

The protein localises to the nucleus. Its subcellular location is the cytoplasm. It functions in the pathway protein modification; protein ubiquitination. May act as a substrate-specific adapter of an E3 ubiquitin-protein ligase complex (CUL3-RBX1-BTB) which mediates the ubiquitination and subsequent proteasomal degradation of target proteins. This Arabidopsis thaliana (Mouse-ear cress) protein is BTB/POZ and MATH domain-containing protein 6 (BPM6).